Here is a 260-residue protein sequence, read N- to C-terminus: uncharacterized protein (260 aa).

Positions 1–22 (MKHSKKLLLCISFLLITIFISG) are cleaved as a signal peptide. A lipid anchor (N-palmitoyl cysteine) is attached at Cys23. Residue Cys23 is the site of S-diacylglycerol cysteine attachment.

This sequence belongs to the staphylococcal tandem lipoprotein family.

It is found in the cell membrane. This is an uncharacterized protein from Staphylococcus epidermidis (strain ATCC 35984 / DSM 28319 / BCRC 17069 / CCUG 31568 / BM 3577 / RP62A).